The sequence spans 107 residues: Large ribosomal subunit protein P2-A (107 aa).

The tract at residues 85 to 107 is disordered; sequence GAAAPAAAAEEEEDDDMGFGLFD.

The protein belongs to the eukaryotic ribosomal protein P1/P2 family. As to quaternary structure, P1 and P2 exist as dimers at the large ribosomal subunit. Post-translationally, phosphorylated.

Functionally, plays an important role in the elongation step of protein synthesis. The polypeptide is Large ribosomal subunit protein P2-A (Trypanosoma cruzi).